Here is a 480-residue protein sequence, read N- to C-terminus: Proline--tRNA ligase (480 aa).

Belongs to the class-II aminoacyl-tRNA synthetase family. ProS type 3 subfamily. Homodimer.

Its subcellular location is the cytoplasm. The enzyme catalyses tRNA(Pro) + L-proline + ATP = L-prolyl-tRNA(Pro) + AMP + diphosphate. Functionally, catalyzes the attachment of proline to tRNA(Pro) in a two-step reaction: proline is first activated by ATP to form Pro-AMP and then transferred to the acceptor end of tRNA(Pro). The chain is Proline--tRNA ligase from Alkaliphilus oremlandii (strain OhILAs) (Clostridium oremlandii (strain OhILAs)).